Consider the following 243-residue polypeptide: Transcription factor A, mitochondrial (243 aa).

A mitochondrion-targeting transit peptide spans 1 to 42 (MALFRGMWSVLKALGRTGVEMCAGCGGRIPSSISLVCIPKCF). A DNA-binding region (HMG box 1) is located at residues 49–117 (PKKPMSSYLR…AYKEAVSKYK (69 aa)). Phosphoserine; by PKA is present on residues Ser54, Ser55, and Ser60. The residue at position 66 (Lys66) is an N6-succinyllysine. The residue at position 121 (Thr121) is a Phosphothreonine. The segment at residues 154-218 (PKRPRSAYNI…RYDNEMKSWE (65 aa)) is a DNA-binding region (HMG box 2). At Ser159 the chain carries Phosphoserine; by PKA. Ser192 carries the phosphoserine modification.

Monomer; binds DNA as a monomer. Homodimer. Component of the mitochondrial transcription initiation complex, composed at least of TFB2M, TFAM and POLRMT. In this complex TFAM recruits POLRMT to the promoter whereas TFB2M induces structural changes in POLRMT to enable promoter opening and trapping of the DNA non-template strand. Upon metabolic stress, forms a complex composed of FOXO3, SIRT3, TFAM and POLRMT. Interacts with TFB1M and TFB2M. Interacts with CLPX; this enhances DNA-binding. Phosphorylation by PKA within the HMG box 1 impairs DNA binding and promotes degradation by the AAA+ Lon protease. As to expression, the mitochondrial isoform is widely expressed while the nuclear isoform is testis-specific.

It localises to the mitochondrion. The protein localises to the mitochondrion matrix. The protein resides in the mitochondrion nucleoid. It is found in the nucleus. In terms of biological role, binds to the mitochondrial light strand promoter and functions in mitochondrial transcription regulation. Component of the mitochondrial transcription initiation complex, composed at least of TFB2M, TFAM and POLRMT that is required for basal transcription of mitochondrial DNA. In this complex, TFAM recruits POLRMT to a specific promoter whereas TFB2M induces structural changes in POLRMT to enable promoter opening and trapping of the DNA non-template strand. Required for accurate and efficient promoter recognition by the mitochondrial RNA polymerase. Promotes transcription initiation from the HSP1 and the light strand promoter by binding immediately upstream of transcriptional start sites. Is able to unwind DNA. Bends the mitochondrial light strand promoter DNA into a U-turn shape via its HMG boxes. Required for maintenance of normal levels of mitochondrial DNA. May play a role in organizing and compacting mitochondrial DNA. Its function is as follows. May also function as a transcriptional activator or may have a structural role in the compaction of nuclear DNA during spermatogenesis. The protein is Transcription factor A, mitochondrial of Mus musculus (Mouse).